Here is a 977-residue protein sequence, read N- to C-terminus: Poly [ADP-ribose] polymerase 1 (977 aa).

PARP-type zinc fingers lie at residues 8–91 and 104–179; these read WKAE…GSAP and CTIE…KKDA. Cys20, Cys23, His52, Cys55, Cys116, Cys119, His141, and Cys144 together coordinate Zn(2+). Disordered stretches follow at residues 177-199 and 218-237; these read KDAP…QNDI and DKGK…DLQE. Positions 227–365 constitute a PADR1 zinc-binding domain; it reads DSNANSSDLQ…AKKPERVLPP (139 aa). An SAP domain is found at 254-288; that stretch reads KKHVSTAELRNMLEANGQDTSGPERHLLDRCADGM. A zinc ribbon region spans residues 291-335; the sequence is GALGTCPVCSSFLYYHGGQYHCSGYVSEWSKCTYSTTEPVRSKKK. Zn(2+) is bound by residues Cys296, Cys299, Cys312, and Cys322. The BRCT domain occupies 381–473; it reads SFLSEGLDKL…RVLPFDLYKV (93 aa). One can recognise a WGR domain in the interval 504–604; sequence TGHILEDGKS…TNFQKQPGKF (101 aa). One can recognise a PARP alpha-helical domain in the interval 626–745; it reads KSSLPPQLLE…DIEIASKLVG (120 aa). Residues 752-977 form the PARP catalytic domain; it reads ESLDDKYKKL…LLKVRFHHKR (226 aa).

It belongs to the ARTD/PARP family.

It is found in the nucleus. It carries out the reaction NAD(+) + (ADP-D-ribosyl)n-acceptor = nicotinamide + (ADP-D-ribosyl)n+1-acceptor + H(+).. The catalysed reaction is L-aspartyl-[protein] + NAD(+) = 4-O-(ADP-D-ribosyl)-L-aspartyl-[protein] + nicotinamide. It catalyses the reaction L-glutamyl-[protein] + NAD(+) = 5-O-(ADP-D-ribosyl)-L-glutamyl-[protein] + nicotinamide. Involved in the base excision repair (BER) pathway, by catalyzing the poly(ADP-ribosyl)ation of a limited number of acceptor proteins involved in chromatin architecture and in DNA metabolism. This modification follows DNA damages and appears as an obligatory step in a detection/signaling pathway leading to the reparation of DNA strand breaks. This chain is Poly [ADP-ribose] polymerase 1 (PARP1), found in Oryza sativa subsp. japonica (Rice).